The chain runs to 338 residues: MSTLRLLISDSYDPWFNLAVEECIFRQMPATQRVLFLWRNADTVVIGRAQNPWKECNTRRMEEDNVRLARRSSGGGAVFHDLGNTCFTFMAGKPEYDKTISTSIVLNALNALGVSAEASGRNDLVVKTAEGDRKVSGSAYRETKDRGFHHGTLLLNADLSRLANYLNPDKKKLAAKGITSVRSRVTNLTELLPGITHEQVCEAITEAFFAHYGERVEAEIISPDKTPDLPNFAETFARQSSWEWNFGQAPAFSHLLDERFTWGGVELHFDVEKGHITRAQVFTDSLNPAPLEALAGRLQGCLYRADMLQQECEALLVDFPEQEKELRELSTWIAGAVR.

The BPL/LPL catalytic domain occupies Pro-29–Val-216. Residues Arg-71, Gly-76 to Phe-79, and Lys-134 contribute to the ATP site. Lys-134 lines the (R)-lipoate pocket.

This sequence belongs to the LplA family. As to quaternary structure, monomer.

It is found in the cytoplasm. It catalyses the reaction L-lysyl-[lipoyl-carrier protein] + (R)-lipoate + ATP = N(6)-[(R)-lipoyl]-L-lysyl-[lipoyl-carrier protein] + AMP + diphosphate + H(+). Its pathway is protein modification; protein lipoylation via exogenous pathway; protein N(6)-(lipoyl)lysine from lipoate: step 1/2. It functions in the pathway protein modification; protein lipoylation via exogenous pathway; protein N(6)-(lipoyl)lysine from lipoate: step 2/2. In terms of biological role, catalyzes both the ATP-dependent activation of exogenously supplied lipoate to lipoyl-AMP and the transfer of the activated lipoyl onto the lipoyl domains of lipoate-dependent enzymes. This is Lipoate-protein ligase A from Escherichia coli (strain SMS-3-5 / SECEC).